The sequence spans 158 residues: NAD(P)H-quinone oxidoreductase subunit N, organellar chromatophore (158 aa).

This sequence belongs to the complex I NdhN subunit family. NDH-1 can be composed of about 15 different subunits; different subcomplexes with different compositions have been identified which probably have different functions.

Its subcellular location is the plastid. The protein resides in the organellar chromatophore thylakoid membrane. The enzyme catalyses a plastoquinone + NADH + (n+1) H(+)(in) = a plastoquinol + NAD(+) + n H(+)(out). It catalyses the reaction a plastoquinone + NADPH + (n+1) H(+)(in) = a plastoquinol + NADP(+) + n H(+)(out). Functionally, NDH-1 shuttles electrons from an unknown electron donor, via FMN and iron-sulfur (Fe-S) centers, to quinones in the respiratory and/or the photosynthetic chain. The immediate electron acceptor for the enzyme in this species is believed to be plastoquinone. Couples the redox reaction to proton translocation, and thus conserves the redox energy in a proton gradient. This chain is NAD(P)H-quinone oxidoreductase subunit N, organellar chromatophore, found in Paulinella chromatophora.